We begin with the raw amino-acid sequence, 417 residues long: Gamma-glutamyl phosphate reductase (417 aa).

Belongs to the gamma-glutamyl phosphate reductase family.

The protein localises to the cytoplasm. It catalyses the reaction L-glutamate 5-semialdehyde + phosphate + NADP(+) = L-glutamyl 5-phosphate + NADPH + H(+). It functions in the pathway amino-acid biosynthesis; L-proline biosynthesis; L-glutamate 5-semialdehyde from L-glutamate: step 2/2. Functionally, catalyzes the NADPH-dependent reduction of L-glutamate 5-phosphate into L-glutamate 5-semialdehyde and phosphate. The product spontaneously undergoes cyclization to form 1-pyrroline-5-carboxylate. This chain is Gamma-glutamyl phosphate reductase, found in Chlorobium phaeobacteroides (strain BS1).